A 308-amino-acid chain; its full sequence is GTPase Era (308 aa).

An Era-type G domain is found at 14–181 (RCGFVALIGA…KQALAAMVPP (168 aa)). A G1 region spans residues 22–29 (GAPNVGKS). Residue 22-29 (GAPNVGKS) coordinates GTP. The interval 48-52 (QTTRA) is G2. Residues 69–72 (DTPG) form a G3 region. Residues 69–73 (DTPGI) and 131–134 (NKVD) contribute to the GTP site. The tract at residues 131 to 134 (NKVD) is G4. The G5 stretch occupies residues 160-162 (ISA). The KH type-2 domain occupies 212-289 (LHQELPYQST…HLFLFVKVRE (78 aa)).

This sequence belongs to the TRAFAC class TrmE-Era-EngA-EngB-Septin-like GTPase superfamily. Era GTPase family. In terms of assembly, monomer.

The protein localises to the cytoplasm. Its subcellular location is the cell inner membrane. An essential GTPase that binds both GDP and GTP, with rapid nucleotide exchange. Plays a role in 16S rRNA processing and 30S ribosomal subunit biogenesis and possibly also in cell cycle regulation and energy metabolism. The protein is GTPase Era of Bradyrhizobium sp. (strain BTAi1 / ATCC BAA-1182).